A 1466-amino-acid polypeptide reads, in one-letter code: Retrovirus-related Pol polyprotein from transposon RE1 (1466 aa).

Residues 227 to 270 form a disordered region; sequence SHRNTTTTNNNNNGNRNNRYDNRNNNNNSKPWQQSSTNFHPNNN. Positions 229–254 are enriched in low complexity; sequence RNTTTTNNNNNGNRNNRYDNRNNNNN. Polar residues predominate over residues 255–270; sequence SKPWQQSSTNFHPNNN. The segment at 278–294 adopts a CCHC-type zinc-finger fold; the sequence is KCQICGVQGHSAKRCSQ. Asp-334 functions as the For protease activity in the catalytic mechanism. The 164-residue stretch at 519–682 folds into the Integrase catalytic domain; that stretch reads NSTRPLEYIY…SPFQKLFGTS (164 aa). Residues Asp-530 and Asp-592 each contribute to the Mg(2+) site. The disordered stretch occupies residues 772–927; sequence WSPHTTLPTR…NNNQAPLNTH (156 aa). Low complexity-rich tracts occupy residues 796 to 827 and 836 to 898; these read AATPPSSPSAPFRNSQVSSSNLDSSFSSSFPS and QNGP…SSTS. The span at 899-912 shows a compositional bias: pro residues; the sequence is PTPPSILIHPPPPL. Residues 915 to 927 show a composition bias toward polar residues; it reads IVNNNNQAPLNTH. The Reverse transcriptase Ty1/copia-type domain occupies 982 to 1225; it reads NHTWDLVPPP…ITAKPVTTPM (244 aa).

It catalyses the reaction DNA(n) + a 2'-deoxyribonucleoside 5'-triphosphate = DNA(n+1) + diphosphate. This chain is Retrovirus-related Pol polyprotein from transposon RE1 (RE1), found in Arabidopsis thaliana (Mouse-ear cress).